Reading from the N-terminus, the 1066-residue chain is Ankyrin repeat protein nuc-2 (1066 aa).

One can recognise an SPX domain in the interval 1-166 (MKFGKQIQKR…KSKTKELYLS (166 aa)). 7 ANK repeats span residues 268-298 (RVTR…DIQS), 336-366 (YGRV…TINL), 370-399 (DNFT…RIDP), 403-432 (TDHV…KILA), 435-465 (EGLY…DLDQ), 470-499 (YGWT…DPNI), and 503-532 (KDLP…EKAA). Residues 717–1048 (ITDFETYWKA…DPFPKLPKGV (332 aa)) form the GP-PDE domain. The segment at 923–963 (KQQQQGSCSKGDGDEDMGGTTAASRREAADERTLQSDGRRT) is disordered. Basic and acidic residues predominate over residues 946–962 (SRREAADERTLQSDGRR).

Functionally, controls phosphorus acquisition. The chain is Ankyrin repeat protein nuc-2 (nuc-2) from Neurospora crassa (strain ATCC 24698 / 74-OR23-1A / CBS 708.71 / DSM 1257 / FGSC 987).